The following is a 150-amino-acid chain: UPF0178 protein PP_5221 (150 aa).

The protein belongs to the UPF0178 family.

The chain is UPF0178 protein PP_5221 from Pseudomonas putida (strain ATCC 47054 / DSM 6125 / CFBP 8728 / NCIMB 11950 / KT2440).